We begin with the raw amino-acid sequence, 307 residues long: tRNA pseudouridine synthase B (307 aa).

The active-site Nucleophile is the Asp38.

It belongs to the pseudouridine synthase TruB family. Type 1 subfamily.

The enzyme catalyses uridine(55) in tRNA = pseudouridine(55) in tRNA. Functionally, responsible for synthesis of pseudouridine from uracil-55 in the psi GC loop of transfer RNAs. The sequence is that of tRNA pseudouridine synthase B from Bacillus cereus (strain ATCC 14579 / DSM 31 / CCUG 7414 / JCM 2152 / NBRC 15305 / NCIMB 9373 / NCTC 2599 / NRRL B-3711).